Consider the following 514-residue polypeptide: Membrane-bound lytic murein transglycosylase F (514 aa).

An N-terminal signal peptide occupies residues Met1–Gly30. A non-LT domain region spans residues Lys31–Gly269. Residues Asp270–Lys514 form an LT domain region. Residue Glu314 is part of the active site.

In the N-terminal section; belongs to the bacterial solute-binding protein 3 family. This sequence in the C-terminal section; belongs to the transglycosylase Slt family.

The protein resides in the cell outer membrane. The enzyme catalyses Exolytic cleavage of the (1-&gt;4)-beta-glycosidic linkage between N-acetylmuramic acid (MurNAc) and N-acetylglucosamine (GlcNAc) residues in peptidoglycan, from either the reducing or the non-reducing ends of the peptidoglycan chains, with concomitant formation of a 1,6-anhydrobond in the MurNAc residue.. Its function is as follows. Murein-degrading enzyme that degrades murein glycan strands and insoluble, high-molecular weight murein sacculi, with the concomitant formation of a 1,6-anhydromuramoyl product. Lytic transglycosylases (LTs) play an integral role in the metabolism of the peptidoglycan (PG) sacculus. Their lytic action creates space within the PG sacculus to allow for its expansion as well as for the insertion of various structures such as secretion systems and flagella. In Salmonella paratyphi B (strain ATCC BAA-1250 / SPB7), this protein is Membrane-bound lytic murein transglycosylase F.